The chain runs to 552 residues: Chaperonin GroEL (552 aa).

Residues 29–32, Lys50, 86–90, Gly417, and Asp499 contribute to the ATP site; these read TAGP and DGTTT.

Belongs to the chaperonin (HSP60) family. As to quaternary structure, forms a cylinder of 14 subunits composed of two heptameric rings stacked back-to-back. Interacts with the co-chaperonin GroES.

The protein resides in the cytoplasm. The enzyme catalyses ATP + H2O + a folded polypeptide = ADP + phosphate + an unfolded polypeptide.. Functionally, together with its co-chaperonin GroES, plays an essential role in assisting protein folding. The GroEL-GroES system forms a nano-cage that allows encapsulation of the non-native substrate proteins and provides a physical environment optimized to promote and accelerate protein folding. The protein is Chaperonin GroEL of Ehrlichia canis (strain Jake).